Reading from the N-terminus, the 21-residue chain is Venom nerve growth factor Bco12 (21 aa).

It belongs to the NGF-beta family. As to quaternary structure, homodimer; non-covalently linked. Glycosylated. In terms of tissue distribution, expressed by the venom gland.

Its subcellular location is the secreted. Its function is as follows. Nerve growth factor is important for the development and maintenance of the sympathetic and sensory nervous systems. It stimulates division and differentiation of sympathetic and embryonic sensory neurons as well as basal forebrain cholinergic neurons in the brain. Its relevance in the snake venom is not clear. However, it has been shown to inhibit metalloproteinase-dependent proteolysis of platelet glycoprotein Ib alpha, suggesting a metalloproteinase inhibition to prevent metalloprotease autodigestion and/or protection against prey proteases. Binds a lipid between the two protein chains in the homodimer. The lipid-bound form promotes histamine relase from mouse mast cells, contrary to the lipid-free form. The chain is Venom nerve growth factor Bco12 from Bothrops cotiara (Cotiara).